A 156-amino-acid polypeptide reads, in one-letter code: MLSAVRRAIPLSARILRTSLIQRCAGATSAAVTGAAPPQFDPIAAEKGFKPLHSHGTLFKIERYFAAAMVPLIPAAYFIHGREMDLCLALALTLHVHWGVWGVVNDYGRPFVLGDTLAAAVRVGAYIFTACLLAGLLYFNEHDVGLTRAFEMVWEL.

Residues 1 to 25 (MLSAVRRAIPLSARILRTSLIQRCA) constitute a mitochondrion transit peptide. Topologically, residues 26-59 (GATSAAVTGAAPPQFDPIAAEKGFKPLHSHGTLF) are mitochondrial matrix. A helical transmembrane segment spans residues 60 to 78 (KIERYFAAAMVPLIPAAYF). The Mitochondrial intermembrane portion of the chain corresponds to 79 to 83 (IHGRE). A helical membrane pass occupies residues 84-104 (MDLCLALALTLHVHWGVWGVV). Residue histidine 95 coordinates heme b. Residues 105–119 (NDYGRPFVLGDTLAA) are Mitochondrial matrix-facing. A rhodoquinol is bound at residue tyrosine 107. Residues 120 to 141 (AVRVGAYIFTACLLAGLLYFNE) form a helical membrane-spanning segment. Residues 142–156 (HDVGLTRAFEMVWEL) lie on the Mitochondrial intermembrane side of the membrane.

It belongs to the CybS family. Component of the mitochondrial electron transport chain complex II composed of four subunits: a flavoprotein (Fp), an iron-sulfur protein (Ip), and a large cytochrome b (CybL) subunit and a small cytochrome b (CybS) subunit. There are 2 developmental stage-specific forms of complex II which have the Ip and CybL subunits in common. Complex II from the free-living larvae (aerobic environment) acts as a succinate dehydrogenase and is composed of the common subunit Ip and CybL and the stage specific subunits FpL and CybSL. Complex II from parasitic larvae and adults (anaerobic environment) acts as a fumarate reductase and is composed of the common subunit Ip and CybL and the stage specific subunits FpA and CybSA. Heme b is required as a cofactor. As to expression, expressed in adult muscles (at protein level).

The protein resides in the mitochondrion inner membrane. Functionally, membrane-bound small subunit (CybS) of the mitochondrial electron transport chain complex II, which together with the membrane-bound large subunit (CybL), anchor the catalytic subunits to the inner mitochondria membrane. During the parasitic larvae and adult stages, which occur in an anaerobic environment, complex II acts as a fumarate reductase by transferring electrons from rhodoquinol to fumarate. The protein is Succinate dehydrogenase [ubiquinone] cytochrome b small subunit 1, mitochondrial of Ascaris suum (Pig roundworm).